The chain runs to 129 residues: Follitropin subunit beta (129 aa).

The first 20 residues, 1–20 (MKSVQLCFLFCCWRAICCKS), serve as a signal peptide directing secretion. Disulfide bonds link C21–C69, C35–C84, C38–C122, C46–C100, C50–C102, and C105–C112. 2 N-linked (GlcNAc...) asparagine glycosylation sites follow: N25 and N42.

The protein belongs to the glycoprotein hormones subunit beta family. In terms of assembly, heterodimer. The active follitropin is a heterodimer composed of an alpha chain/CGA shared with other hormones and a unique beta chain/FSHB shown here.

It localises to the secreted. Together with the alpha chain CGA constitutes follitropin, the follicle-stimulating hormone, and provides its biological specificity to the hormone heterodimer. Binds FSHR, a G protein-coupled receptor, on target cells to activate downstream signaling pathways. Follitropin is involved in follicle development and spermatogenesis in reproductive organs. This chain is Follitropin subunit beta (FSHB), found in Ailuropoda melanoleuca (Giant panda).